A 201-amino-acid chain; its full sequence is 5'(3')-deoxyribonucleotidase, cytosolic type (201 aa).

Aspartate 10 serves as the catalytic Nucleophile. Aspartate 10 and aspartate 12 together coordinate Mg(2+). Aspartate 12 serves as the catalytic Proton donor. 5 residues coordinate substrate: phenylalanine 18, phenylalanine 44, tyrosine 65, threonine 99, and lysine 134. A Mg(2+)-binding site is contributed by aspartate 145. Residue serine 182 is modified to Phosphoserine.

This sequence belongs to the 5'(3')-deoxyribonucleotidase family. Homodimer. Mg(2+) serves as cofactor. Detected in skeletal muscle, heart and pancreas.

It localises to the cytoplasm. Functionally, dephosphorylates the 5' and 2'(3')-phosphates of deoxyribonucleotides, with a preference for dUMP and dTMP, intermediate activity towards dGMP, and low activity towards dCMP and dAMP. This Homo sapiens (Human) protein is 5'(3')-deoxyribonucleotidase, cytosolic type (NT5C).